Consider the following 397-residue polypeptide: Argininosuccinate synthase (397 aa).

Residue 8–16 (AYSGGLDTS) coordinates ATP. Positions 86 and 91 each coordinate L-citrulline. Gly-116 is a binding site for ATP. Thr-118, Asn-122, and Asp-123 together coordinate L-aspartate. Position 122 (Asn-122) interacts with L-citrulline. Residues Arg-126, Ser-175, Ser-184, Glu-260, and Tyr-272 each contribute to the L-citrulline site.

It belongs to the argininosuccinate synthase family. Type 1 subfamily. Homotetramer.

The protein resides in the cytoplasm. The catalysed reaction is L-citrulline + L-aspartate + ATP = 2-(N(omega)-L-arginino)succinate + AMP + diphosphate + H(+). It participates in amino-acid biosynthesis; L-arginine biosynthesis; L-arginine from L-ornithine and carbamoyl phosphate: step 2/3. This is Argininosuccinate synthase from Clostridium botulinum (strain Okra / Type B1).